The following is a 1053-amino-acid chain: Sal-like protein 4 (1053 aa).

A disordered region spans residues 1–62 (MSRRKQAKPQ…DEVASEDEAT (62 aa)). Residues 20-46 (EQQPQQQTPEFADAAPAAPAAGELGAP) show a composition bias toward low complexity. The residue at position 57 (S57) is a Phosphoserine. The C2H2-type 1; atypical zinc finger occupies 72-94 (HVCEKCCAEFFSISEFLEHKKNC). Residues 116–149 (SGAVLSHQPTSPGSKDCHRENGGSSEDMKEKPDA) form a disordered region. Residues 130–149 (KDCHRENGGSSEDMKEKPDA) show a composition bias toward basic and acidic residues. A Glycyl lysine isopeptide (Lys-Gly) (interchain with G-Cter in SUMO1); alternate cross-link involves residue K156. Residue K156 forms a Glycyl lysine isopeptide (Lys-Gly) (interchain with G-Cter in SUMO2); alternate linkage. Glycyl lysine isopeptide (Lys-Gly) (interchain with G-Cter in SUMO2) cross-links involve residues K175, K190, and K290. S307 carries the post-translational modification Phosphoserine. Residue K316 forms a Glycyl lysine isopeptide (Lys-Gly) (interchain with G-Cter in SUMO1); alternate linkage. Residue K316 forms a Glycyl lysine isopeptide (Lys-Gly) (interchain with G-Cter in SUMO2); alternate linkage. K372 participates in a covalent cross-link: Glycyl lysine isopeptide (Lys-Gly) (interchain with G-Cter in SUMO2). K374 is covalently cross-linked (Glycyl lysine isopeptide (Lys-Gly) (interchain with G-Cter in SUMO1); alternate). Residue K374 forms a Glycyl lysine isopeptide (Lys-Gly) (interchain with G-Cter in SUMO2); alternate linkage. 2 C2H2-type zinc fingers span residues 382–404 (HKCK…LRSH) and 410–432 (FVCS…FHRH). K436 is covalently cross-linked (Glycyl lysine isopeptide (Lys-Gly) (interchain with G-Cter in SUMO2)). The span at 483–496 (VGLPQNLSSGTNPK) shows a compositional bias: polar residues. A disordered region spans residues 483–546 (VGLPQNLSSG…QGSGTPEPGS (64 aa)). At T541 the chain carries Phosphothreonine. K550 is covalently cross-linked (Glycyl lysine isopeptide (Lys-Gly) (interchain with G-Cter in SUMO2)). C2H2-type zinc fingers lie at residues 566-588 (NECL…YRTH) and 594-616 (FQCK…LGVH). Glycyl lysine isopeptide (Lys-Gly) (interchain with G-Cter in SUMO2) cross-links involve residues K597 and K623. A C2H2-type 6 zinc finger spans residues 626 to 648 (HSCPICQKKFTNAVMLQQHIRMH). Disordered stretches follow at residues 694-714 (EEVS…PLPS), 736-776 (VGPA…QSRS), and 788-828 (LSPA…LPST). A compositionally biased stretch (low complexity) spans 698-708 (SQEAPSSSSKV). 2 stretches are compositionally biased toward polar residues: residues 743 to 776 (LQRQ…QSRS) and 788 to 797 (LSPANSQAES). Phosphoserine is present on residues S776 and S789. Residues 810–821 (ESSENSRTEMEG) show a composition bias toward basic and acidic residues. Residue K838 forms a Glycyl lysine isopeptide (Lys-Gly) (interchain with G-Cter in SUMO1); alternate linkage. K838 participates in a covalent cross-link: Glycyl lysine isopeptide (Lys-Gly) (interchain with G-Cter in SUMO2); alternate. S852 is modified (phosphoserine). Residues 870–892 (HGCTRCGKNFSSASALQIHERTH) form a C2H2-type 7 zinc finger. Residue K896 forms a Glycyl lysine isopeptide (Lys-Gly) (interchain with G-Cter in SUMO2) linkage. The segment at 898-920 (FVCNICGRAFTTKGNLKVHYMTH) adopts a C2H2-type 8 zinc-finger fold. Residues K932 and K947 each participate in a glycyl lysine isopeptide (Lys-Gly) (interchain with G-Cter in SUMO2) cross-link. The interval 1018–1039 (GSQSGISADVEKPSATDGVPKH) is disordered. S1019 bears the Phosphoserine mark.

The protein belongs to the sal C2H2-type zinc-finger protein family. Interacts with POU5F1/OCT4. Interacts with NANOG. Interacts with BEND3. Interacts with NSD2 (via PHD-type zinc fingers 1, 2 and 3). Interacts with NRBP1. Isoform SALL4B exists primarily as a ubiquitinated form. In terms of processing, sumoylation with both SUMO1 and SUMO2 regulates the stability, subcellular localization, transcriptional activity, and may reduce interaction with POU5F1/OCT4. In terms of tissue distribution, expressed in testis. Constitutively expressed in acute myeloid leukemia (AML).

It is found in the cytoplasm. The protein localises to the nucleus. Its function is as follows. Transcription factor with a key role in the maintenance and self-renewal of embryonic and hematopoietic stem cells. The sequence is that of Sal-like protein 4 (SALL4) from Homo sapiens (Human).